Here is a 193-residue protein sequence, read N- to C-terminus: dTTP/UTP pyrophosphatase (193 aa).

Aspartate 75 acts as the Proton acceptor in catalysis.

This sequence belongs to the Maf family. YhdE subfamily. Requires a divalent metal cation as cofactor.

The protein localises to the cytoplasm. The catalysed reaction is dTTP + H2O = dTMP + diphosphate + H(+). The enzyme catalyses UTP + H2O = UMP + diphosphate + H(+). Its function is as follows. Nucleoside triphosphate pyrophosphatase that hydrolyzes dTTP and UTP. May have a dual role in cell division arrest and in preventing the incorporation of modified nucleotides into cellular nucleic acids. This is dTTP/UTP pyrophosphatase from Chlorobium luteolum (strain DSM 273 / BCRC 81028 / 2530) (Pelodictyon luteolum).